The sequence spans 398 residues: 1-deoxy-D-xylulose 5-phosphate reductoisomerase (398 aa).

Positions 10, 11, 12, 13, and 124 each coordinate NADPH. Lys-125 contributes to the 1-deoxy-D-xylulose 5-phosphate binding site. Glu-126 is an NADPH binding site. Residue Asp-150 participates in Mn(2+) binding. 1-deoxy-D-xylulose 5-phosphate contacts are provided by Ser-151, Glu-152, Ser-186, and His-209. Residue Glu-152 participates in Mn(2+) binding. Gly-215 lines the NADPH pocket. Positions 222, 227, 228, and 231 each coordinate 1-deoxy-D-xylulose 5-phosphate. Glu-231 serves as a coordination point for Mn(2+).

This sequence belongs to the DXR family. Mg(2+) serves as cofactor. The cofactor is Mn(2+).

The catalysed reaction is 2-C-methyl-D-erythritol 4-phosphate + NADP(+) = 1-deoxy-D-xylulose 5-phosphate + NADPH + H(+). Its pathway is isoprenoid biosynthesis; isopentenyl diphosphate biosynthesis via DXP pathway; isopentenyl diphosphate from 1-deoxy-D-xylulose 5-phosphate: step 1/6. In terms of biological role, catalyzes the NADPH-dependent rearrangement and reduction of 1-deoxy-D-xylulose-5-phosphate (DXP) to 2-C-methyl-D-erythritol 4-phosphate (MEP). In Tolumonas auensis (strain DSM 9187 / NBRC 110442 / TA 4), this protein is 1-deoxy-D-xylulose 5-phosphate reductoisomerase.